Reading from the N-terminus, the 267-residue chain is Phosphate import ATP-binding protein PstB (267 aa).

One can recognise an ABC transporter domain in the interval 21–262 (VAARNLDFYY…PSKQQTEDYI (242 aa)). Residue 53 to 60 (GPSGCGKS) coordinates ATP.

The protein belongs to the ABC transporter superfamily. Phosphate importer (TC 3.A.1.7) family. As to quaternary structure, the complex is composed of two ATP-binding proteins (PstB), two transmembrane proteins (PstC and PstA) and a solute-binding protein (PstS).

It localises to the cell inner membrane. The catalysed reaction is phosphate(out) + ATP + H2O = ADP + 2 phosphate(in) + H(+). Functionally, part of the ABC transporter complex PstSACB involved in phosphate import. Responsible for energy coupling to the transport system. This is Phosphate import ATP-binding protein PstB from Xanthomonas campestris pv. campestris (strain 8004).